Reading from the N-terminus, the 393-residue chain is Endoplasmic reticulum junction formation protein lunapark-A (393 aa).

Residues 1 to 45 (MGAVVSRWRAKPSTVEVLEGLDKDIQVLEEYREKNHKQLKLWVYR) are Cytoplasmic-facing. A helical membrane pass occupies residues 46 to 66 (LLLYSALLYLMACAVVYAWYI). Residues 67-69 (PER) lie on the Lumenal side of the membrane. The chain crosses the membrane as a helical span at residues 70–90 (MIGKLIVASPFLLFPLLIWLL). The Cytoplasmic segment spans residues 91-393 (RKLLIILYNK…EQDVSAMEVE (303 aa)). Residues 95-130 (IILYNKRTERNNEKLEELKAEKKKILEQVMETETYK) are a coiled coil. Positions 146–209 (KLELETQPIG…PPEKGLSAST (64 aa)) are disordered. The segment covering 176–190 (TGRPPPVPVPGPSVP) has biased composition (pro residues). The C4-type; plays a role in ER morphology zinc finger occupies 269–294 (CQQCLSHNGMALKEEFEYIAFRCAYC). Residues 314–393 (AAEAKTSQDP…EQDVSAMEVE (80 aa)) form a disordered region. Composition is skewed to basic and acidic residues over residues 340-353 (ESKE…KAGD) and 364-383 (EEMK…KSDG).

It belongs to the lunapark family. In terms of assembly, homodimer; homodimerization requires the C4-type zinc finger motif and decreases during mitosis in a phosphorylation-dependent manner. Post-translationally, phosphorylated. Phosphorylation occurs during interphase. Phosphorylation also occurs during mitosis; these phosphorylations reduce both its homodimerization and the ER three-way tubular junction formation.

The protein resides in the endoplasmic reticulum membrane. Functionally, endoplasmic reticulum (ER)-shaping membrane protein that plays a role in determining ER morphology. Involved in the stabilization of nascent three-way ER tubular junctions within the ER network. May also play a role as a curvature-stabilizing protein within three-way ER tubular junction network. The sequence is that of Endoplasmic reticulum junction formation protein lunapark-A (lnpka) from Danio rerio (Zebrafish).